A 105-amino-acid polypeptide reads, in one-letter code: Nitrogenase-stabilizing/protective protein NifW (105 aa).

The protein belongs to the NifW family. Homotrimer; associates with NifD.

May protect the nitrogenase Fe-Mo protein from oxidative damage. This Nostoc punctiforme (strain ATCC 29133 / PCC 73102) protein is Nitrogenase-stabilizing/protective protein NifW.